Reading from the N-terminus, the 273-residue chain is 2,3,4,5-tetrahydropyridine-2,6-dicarboxylate N-succinyltransferase (273 aa).

Substrate is bound by residues arginine 104 and aspartate 141.

This sequence belongs to the transferase hexapeptide repeat family. In terms of assembly, homotrimer.

It is found in the cytoplasm. It carries out the reaction (S)-2,3,4,5-tetrahydrodipicolinate + succinyl-CoA + H2O = (S)-2-succinylamino-6-oxoheptanedioate + CoA. Its pathway is amino-acid biosynthesis; L-lysine biosynthesis via DAP pathway; LL-2,6-diaminopimelate from (S)-tetrahydrodipicolinate (succinylase route): step 1/3. This Azoarcus sp. (strain BH72) protein is 2,3,4,5-tetrahydropyridine-2,6-dicarboxylate N-succinyltransferase.